The chain runs to 247 residues: Probable transcriptional regulatory protein plu2109 (247 aa).

The protein belongs to the TACO1 family.

It is found in the cytoplasm. The chain is Probable transcriptional regulatory protein plu2109 from Photorhabdus laumondii subsp. laumondii (strain DSM 15139 / CIP 105565 / TT01) (Photorhabdus luminescens subsp. laumondii).